We begin with the raw amino-acid sequence, 246 residues long: Dihydroorotate dehydrogenase B (NAD(+)), electron transfer subunit (246 aa).

The FAD-binding FR-type domain occupies 3 to 95; sequence MEYFKGKVKE…IGPLGNGFDI (93 aa). FAD-binding positions include 48–51 and 70–71; these read RPIS and GT. [2Fe-2S] cluster contacts are provided by Cys-213, Cys-218, Cys-221, and Cys-233.

It belongs to the PyrK family. As to quaternary structure, heterotetramer of 2 PyrK and 2 PyrD type B subunits. [2Fe-2S] cluster serves as cofactor. It depends on FAD as a cofactor.

The protein operates within pyrimidine metabolism; UMP biosynthesis via de novo pathway; orotate from (S)-dihydroorotate (NAD(+) route): step 1/1. Functionally, responsible for channeling the electrons from the oxidation of dihydroorotate from the FMN redox center in the PyrD type B subunit to the ultimate electron acceptor NAD(+). This chain is Dihydroorotate dehydrogenase B (NAD(+)), electron transfer subunit, found in Clostridium perfringens (strain 13 / Type A).